Consider the following 802-residue polypeptide: Probable inactive leucine-rich repeat receptor-like protein kinase At3g03770 (802 aa).

Positions 1–26 (MEKLYCGMPLLLLVLLLASIDGSTQL) are cleaved as a signal peptide. Residues 27 to 391 (QSSQSQTLLR…RNKVSKVGIA (365 aa)) lie on the Extracellular side of the membrane. N52 and N83 each carry an N-linked (GlcNAc...) asparagine glycan. LRR repeat units lie at residues 71–94 (EDSV…SFSI), 104–128 (LPDV…INRL), 129–152 (SSLE…LSSL), 153–176 (ATLQ…IDSL), 177–200 (PSLA…LSSL), 201–225 (SGLR…HLTN), 227–244 (QVLD…PRLS), 245–268 (NKLV…EVSS), 269–293 (LYQL…LMSL), 294–317 (PAIT…LSCN), and 319–341 (QLMF…LKPS). N135 carries an N-linked (GlcNAc...) asparagine glycan. N190 is a glycosylation site (N-linked (GlcNAc...) asparagine). N-linked (GlcNAc...) asparagine glycosylation is found at N300 and N313. The chain crosses the membrane as a helical span at residues 392–412 (LGVTASILGVLLLAGALFVVL). Residues 413-802 (RRLNAKKTVT…RDSGCEEHER (390 aa)) are Cytoplasmic-facing. In terms of domain architecture, Protein kinase spans 477–759 (FESSAFMGEG…FASQVQEGWL (283 aa)). The tract at residues 761 to 802 (NSNPSSNLGSPSPAASSLPPPSRLHVTTLESPRDSGCEEHER) is disordered. Over residues 762–777 (SNPSSNLGSPSPAASS) the composition is skewed to low complexity. Basic and acidic residues predominate over residues 791–802 (SPRDSGCEEHER).

Belongs to the protein kinase superfamily. Ser/Thr protein kinase family.

It is found in the cell membrane. This chain is Probable inactive leucine-rich repeat receptor-like protein kinase At3g03770, found in Arabidopsis thaliana (Mouse-ear cress).